The sequence spans 113 residues: N(2)-fixation sustaining protein CowN (113 aa).

Belongs to the CowN family.

Functionally, is required to sustain N(2)-dependent growth in the presence of low levels of carbon monoxide (CO). Probably acts by protecting the N(2) fixation ability of the nitrogenase complex, which is inactivated in the presence of CO. The chain is N(2)-fixation sustaining protein CowN from Azoarcus sp. (strain BH72).